A 246-amino-acid chain; its full sequence is MWIGVISLFPEMFKAITEFGVTGRAVKHNLLKVECWNPRDFTFDKHKTVDDRPYGGGPGMLMMVQPLRDAIHTAKAAAGEGAKVIYLSPQGRKLDQGGVTELAQNQKLILVCGRYEGIDERLIQTEIDEEWSIGDYVLTGGELPAMTLIDAVARFIPGVLGKQASAEEDSFADGLLDCPHYTRPEVLEGLTVPPVLMSGHHEEIRKWRLKQSLQRTWLRRPELLEGLALTDEQRKLLKEAQAEHNS.

Residues G113 and 133 to 138 each bind S-adenosyl-L-methionine; that span reads IGDYVL.

Belongs to the RNA methyltransferase TrmD family. Homodimer.

The protein resides in the cytoplasm. The catalysed reaction is guanosine(37) in tRNA + S-adenosyl-L-methionine = N(1)-methylguanosine(37) in tRNA + S-adenosyl-L-homocysteine + H(+). Specifically methylates guanosine-37 in various tRNAs. The sequence is that of tRNA (guanine-N(1)-)-methyltransferase from Haemophilus influenzae (strain PittGG).